We begin with the raw amino-acid sequence, 67 residues long: Protein SlyX homolog (67 aa).

Belongs to the SlyX family.

The chain is Protein SlyX homolog from Mesorhizobium japonicum (strain LMG 29417 / CECT 9101 / MAFF 303099) (Mesorhizobium loti (strain MAFF 303099)).